We begin with the raw amino-acid sequence, 236 residues long: Small ribosomal subunit protein uS2c (236 aa).

Belongs to the universal ribosomal protein uS2 family.

Its subcellular location is the plastid. The protein localises to the chloroplast. The protein is Small ribosomal subunit protein uS2c (rps2) of Lactuca sativa (Garden lettuce).